The sequence spans 648 residues: MADDTGTDNEGTGCSGWFLVEAIVDKTTGEQVSDDEDETVEDSGLDMVDFIDDRPITHNSLEAQALLNEQEADAHYAAVQDLKRKYLGSPYVSPLGHIEQSVDCDISPRLDAIQLSRKPKKVKRRLFQSREITDSGYGYSEVETATQVERYGEPENGCGGGGDGREKEGEGQVHTEVHTESEIEQHTGTTRVLELLKCKDVRATLHGKFKECYGLSFKDLTREFKSDKTTCGDWVVAGFGVHHSVSEAFQKLIQPLSTYSHIQWLTNYKCMGMVLLVLLRFKVNKNRCTVARTLATLLNIPEDHMLIEPPKIQSSVAALYWFRTSISNASIVTGDTPEWIARQTIVEHGLADNQFKLTEMVQWAYDNDYCDESDIAFEYAQRADFDSNAKAFLNSNCQAKYVKDCATMCKHYKNAEMKKMSIKQWIKYRSNKIDETGNWKPIVQFLRHQGIEFISFLSKLKLWLHGTPKKNCIAIVGPPDTGKSAFCMSLIKFLGGTVISYVNSSSHFWLQPLCNAKVALLDDATQSCWGYMDTYMRNLLDGNPMSIDRKHKSLALIKCPPLLVTSNIDITTEERYKYLYSRVTLFKFPNPFPFDSNGNAVYELCDANWKCFFARLSASLDIQDSEDEDDGDTSQAFRCVPGTVVRTV.

Residues lysine 83–lysine 85 carry the Nuclear localization signal motif. 3 positions are modified to phosphoserine; by host: serine 89, serine 93, and serine 107. The Nuclear export signal signature appears at isoleucine 106–leucine 115. The tract at residues tyrosine 151–histidine 186 is disordered. Positions aspartate 163–glutamine 185 are enriched in basic and acidic residues. The interval glutamate 184 to aspartate 352 is DNA-binding region. One can recognise an SF3 helicase domain in the interval isoleucine 451–valine 601. Glycine 477 to serine 484 lines the ATP pocket. Lysine 558 participates in a covalent cross-link: Glycyl lysine isopeptide (Lys-Gly) (interchain with G-Cter in SUMO).

The protein belongs to the papillomaviridae E1 protein family. Can form hexamers. Interacts with E2 protein; this interaction increases E1 DNA binding specificity. Interacts with host DNA polymerase subunit POLA2. Interacts with host single stranded DNA-binding protein RPA1. Interacts with host TOP1; this interaction stimulates the enzymatic activity of TOP1. Post-translationally, phosphorylated. Sumoylated.

The protein resides in the host nucleus. It carries out the reaction Couples ATP hydrolysis with the unwinding of duplex DNA by translocating in the 3'-5' direction.. The enzyme catalyses ATP + H2O = ADP + phosphate + H(+). Functionally, ATP-dependent DNA 3'-5' helicase required for initiation of viral DNA replication. It forms a complex with the viral E2 protein. The E1-E2 complex binds to the replication origin which contains binding sites for both proteins. During the initial step, a dimer of E1 interacts with a dimer of protein E2 leading to a complex that binds the viral origin of replication with high specificity. Then, a second dimer of E1 displaces the E2 dimer in an ATP-dependent manner to form the E1 tetramer. Following this, two E1 monomers are added to each half of the site, which results in the formation of two E1 trimers on the viral ori. Subsequently, two hexamers will be created. The double hexamer acts as a bi-directional helicase machinery and unwinds the viral DNA and then recruits the host DNA polymerase to start replication. This is Replication protein E1 from Pygmy chimpanzee papillomavirus type 1C (PCPV-1C).